The sequence spans 179 residues: MSSRVLTPDVVGIDALVHDHQTVLAKAEGGVVAVFANNAPAFYAVTPARLAELLALEEKLARPGSDVALDDQLYQEPQAAPVAVPMGKFAMYPDWQPDADFIRLAALWGVALREPVTTEELASFIAYWQAEGKVFHHVQWQQKLARSLQIGRASNGGLPKRDVNTVSEPDSQIPPGFRG.

The tract at residues 156–179 (GGLPKRDVNTVSEPDSQIPPGFRG) is disordered.

Belongs to the DnaT family. In terms of assembly, homooligomerizes. Interacts with PriB. Component of the replication restart primosome. Primosome assembly occurs via a 'hand-off' mechanism. PriA binds to replication forks, subsequently PriB then DnaT bind; DnaT then displaces ssDNA to generate the helicase loading substrate.

Functionally, involved in the restart of stalled replication forks, which reloads the replicative helicase on sites other than the origin of replication. Can function in multiple replication restart pathways. Displaces ssDNA from a PriB-ssDNA complex. Probably forms a spiral filament on ssDNA. The protein is Replication restart protein DnaT of Shigella boydii serotype 18 (strain CDC 3083-94 / BS512).